The sequence spans 117 residues: Large ribosomal subunit protein bL20c (117 aa).

This sequence belongs to the bacterial ribosomal protein bL20 family.

The protein localises to the plastid. Binds directly to 23S ribosomal RNA and is necessary for the in vitro assembly process of the 50S ribosomal subunit. It is not involved in the protein synthesizing functions of that subunit. This Euglena longa (Euglenophycean alga) protein is Large ribosomal subunit protein bL20c (rpl20).